A 505-amino-acid polypeptide reads, in one-letter code: Histidine ammonia-lyase (505 aa).

Positions 141-143 (ASG) form a cross-link, 5-imidazolinone (Ala-Gly). Position 142 is a 2,3-didehydroalanine (Ser) (S142).

It belongs to the PAL/histidase family. In terms of processing, contains an active site 4-methylidene-imidazol-5-one (MIO), which is formed autocatalytically by cyclization and dehydration of residues Ala-Ser-Gly.

The protein resides in the cytoplasm. It catalyses the reaction L-histidine = trans-urocanate + NH4(+). It participates in amino-acid degradation; L-histidine degradation into L-glutamate; N-formimidoyl-L-glutamate from L-histidine: step 1/3. This is Histidine ammonia-lyase from Bacillus cereus (strain 03BB102).